We begin with the raw amino-acid sequence, 863 residues long: Alanine--tRNA ligase (863 aa).

Zn(2+) is bound by residues His-552, His-556, Cys-654, and His-658.

It belongs to the class-II aminoacyl-tRNA synthetase family. Zn(2+) is required as a cofactor.

It is found in the cytoplasm. The enzyme catalyses tRNA(Ala) + L-alanine + ATP = L-alanyl-tRNA(Ala) + AMP + diphosphate. In terms of biological role, catalyzes the attachment of alanine to tRNA(Ala) in a two-step reaction: alanine is first activated by ATP to form Ala-AMP and then transferred to the acceptor end of tRNA(Ala). Also edits incorrectly charged Ser-tRNA(Ala) and Gly-tRNA(Ala) via its editing domain. This is Alanine--tRNA ligase from Nitrosomonas europaea (strain ATCC 19718 / CIP 103999 / KCTC 2705 / NBRC 14298).